The chain runs to 492 residues: Glutamate--cysteine ligase A, chloroplastic (492 aa).

Cys156 and Cys376 are oxidised to a cystine.

The protein belongs to the carboxylate-amine ligase family. Glutamate--cysteine ligase type 2 subfamily. In terms of assembly, homodimer or monomer when oxidized or reduced, respectively. Post-translationally, the Cys-156-Cys-376 disulfide bridge is known to modulate the enzyme activity according to the redox status. The oxidized form constitutes the active enzyme.

It is found in the plastid. Its subcellular location is the chloroplast. It carries out the reaction L-cysteine + L-glutamate + ATP = gamma-L-glutamyl-L-cysteine + ADP + phosphate + H(+). It functions in the pathway sulfur metabolism; glutathione biosynthesis; glutathione from L-cysteine and L-glutamate: step 1/2. The polypeptide is Glutamate--cysteine ligase A, chloroplastic (GSH1-1) (Oryza sativa subsp. indica (Rice)).